A 156-amino-acid chain; its full sequence is UPF0262 protein Jann_2882 (156 aa).

The protein belongs to the UPF0262 family.

This Jannaschia sp. (strain CCS1) protein is UPF0262 protein Jann_2882.